A 334-amino-acid chain; its full sequence is Phosphate acyltransferase (334 aa).

Belongs to the PlsX family. Homodimer. Probably interacts with PlsY.

It is found in the cytoplasm. It catalyses the reaction a fatty acyl-[ACP] + phosphate = an acyl phosphate + holo-[ACP]. It participates in lipid metabolism; phospholipid metabolism. Its function is as follows. Catalyzes the reversible formation of acyl-phosphate (acyl-PO(4)) from acyl-[acyl-carrier-protein] (acyl-ACP). This enzyme utilizes acyl-ACP as fatty acyl donor, but not acyl-CoA. The sequence is that of Phosphate acyltransferase from Thermotoga petrophila (strain ATCC BAA-488 / DSM 13995 / JCM 10881 / RKU-1).